Reading from the N-terminus, the 468-residue chain is 6-phosphogluconate dehydrogenase, decarboxylating (468 aa).

Residues 10–15 (GMAVMG), 33–35 (NRS), 74–76 (VKA), and Asn102 contribute to the NADP(+) site. Substrate-binding positions include Asn102 and 128 to 130 (SGG). The Proton acceptor role is filled by Lys183. Residue 186–187 (HN) coordinates substrate. Glu190 serves as the catalytic Proton donor. 5 residues coordinate substrate: Tyr191, Lys260, Arg287, Arg445, and His451.

Belongs to the 6-phosphogluconate dehydrogenase family. Homodimer.

The catalysed reaction is 6-phospho-D-gluconate + NADP(+) = D-ribulose 5-phosphate + CO2 + NADPH. Its pathway is carbohydrate degradation; pentose phosphate pathway; D-ribulose 5-phosphate from D-glucose 6-phosphate (oxidative stage): step 3/3. Functionally, catalyzes the oxidative decarboxylation of 6-phosphogluconate to ribulose 5-phosphate and CO(2), with concomitant reduction of NADP to NADPH. This chain is 6-phosphogluconate dehydrogenase, decarboxylating (gnd), found in Shigella flexneri.